We begin with the raw amino-acid sequence, 959 residues long: MSKKRLHEIAKEIGKSSKEVVERAKSLGLDVKSHASSVEEADANKIASSFSAGVTKNVQAGSAKDKQVAEQKAKAAKATTPQPAASKAAEKPAAATQEASQPVAVKPKSRNFKAEREARAKEQVARRQAGQNRSNDRKSDYRQLGRSQGQQTERAGHKSQNQQRDRRFDNRPSSGNNRNDGHRQAGNRDKNRSFNANSRQQDIGRQGQTQAGAPKIDFKARAAALKAEQNAEYARQRESRFREQEEAKRLEQQARQEAKAAALKAQTEDKKHREAPAKATEPAEPVASMAAAPVAKPVDKRRKKQNRPDKAHDRDHGLEDGQKKNKKSWNSQNQVRNQKNSNWNNNKKNKKGKHHKNSNTAPKPVTERKFHELPKEFEYSEGMTVAEIAKRIKREPAEIVKKLFMMGVMATQNQSLDGDTIELLMVDYGIEAKAKVEVDEADIERFFTDDNYLNPDNIVERAPVVTIMGHVDHGKTTLLDTLRNSRVATGEAGGITQHIGAYQIEEAGKKITFLDTPGHAAFTSMRARGASVTDITILIVAADDGVMPQTIEAINHSKAAGVPIIVAINKIDKPGANPERVISELAEHGIISTTWGGECEFVEISAKFNKNIDELLETVLLVAEVEELKADPTVRAIGTVIEARLDKGKGAVATLLVQQGTLHVQDPIVVGNTFGRVRAMTNDLGRRVKSAEPSTPVSITGLNETPMAGDHFAVYADEKAARAAGEERAKRALLKQRQNTQRVSLDNLFDTLKAGEIKTVNVIIKADVQGSVEALAASLLKIDVEGVRVNVVHSAVGAINESDVTLAEASNAVIIGFNVRPTPQARQQADADDVEIRLHSIIYKVIEEVEEAMKGKLDPEYQEKVLGEAIIRETFKVSKVGTIGGFMVVNGKVTRDSSVRVIRDSVVIFDGKLASLKHYKDDVKEIGNAQEGGLMIEGFNDIKVDDTIEAYVMEEIIRK.

The disordered stretch occupies residues 33–373 (SHASSVEEAD…PVTERKFHEL (341 aa)). The segment covering 46–60 (IASSFSAGVTKNVQA) has biased composition (polar residues). The segment covering 63-73 (AKDKQVAEQKA) has biased composition (basic and acidic residues). The segment covering 76-100 (AKATTPQPAASKAAEKPAAATQEAS) has biased composition (low complexity). Basic and acidic residues-rich tracts occupy residues 112-125 (FKAE…EQVA), 134-143 (SNDRKSDYRQ), and 179-192 (NDGH…DKNR). Residues 193 to 211 (SFNANSRQQDIGRQGQTQA) show a composition bias toward polar residues. Composition is skewed to basic and acidic residues over residues 234–258 (ARQR…RQEA) and 266–276 (QTEDKKHREAP). The span at 277–287 (AKATEPAEPVA) shows a compositional bias: low complexity. A compositionally biased stretch (basic and acidic residues) spans 306-323 (NRPDKAHDRDHGLEDGQK). The segment covering 328 to 346 (SWNSQNQVRNQKNSNWNNN) has biased composition (low complexity). Residues 347–357 (KKNKKGKHHKN) show a composition bias toward basic residues. The region spanning 460-629 (ERAPVVTIMG…LLVAEVEELK (170 aa)) is the tr-type G domain. The tract at residues 469–476 (GHVDHGKT) is G1. 469 to 476 (GHVDHGKT) lines the GTP pocket. A G2 region spans residues 494–498 (GITQH). Residues 515–518 (DTPG) form a G3 region. Residues 515 to 519 (DTPGH) and 569 to 572 (NKID) each bind GTP. Positions 569-572 (NKID) are G4. A G5 region spans residues 605–607 (SAK).

The protein belongs to the TRAFAC class translation factor GTPase superfamily. Classic translation factor GTPase family. IF-2 subfamily.

Its subcellular location is the cytoplasm. One of the essential components for the initiation of protein synthesis. Protects formylmethionyl-tRNA from spontaneous hydrolysis and promotes its binding to the 30S ribosomal subunits. Also involved in the hydrolysis of GTP during the formation of the 70S ribosomal complex. This is Translation initiation factor IF-2 from Streptococcus equi subsp. zooepidemicus (strain H70).